Consider the following 128-residue polypeptide: Platelet basic protein (128 aa).

An N-terminal signal peptide occupies residues 1–34 (MSLRLDTTPSCNSARPLHALQVLLLLSLLLTALA). 2 cysteine pairs are disulfide-bonded: Cys63–Cys89 and Cys65–Cys105.

This sequence belongs to the intercrine alpha (chemokine CxC) family. In terms of assembly, beta-thromboglobulin is a homotetramer. Post-translationally, proteolytic removal of residues 1-9 produces the active peptide connective tissue-activating peptide III (CTAP-III) (low-affinity platelet factor IV (LA-PF4)). Proteolytic removal of residues 1-13 produces the active peptide beta-thromboglobulin, which is released from platelets along with platelet factor 4 and platelet-derived growth factor. In terms of processing, NAP-2(1-66) is produced by proteolytical processing, probably after secretion by leukocytes other than neutrophils. Post-translationally, NAP-2(73) and NAP-2(74) seem not be produced by proteolytical processing of secreted precursors but are released in an active form from platelets.

Its subcellular location is the secreted. Its function is as follows. LA-PF4 stimulates DNA synthesis, mitosis, glycolysis, intracellular cAMP accumulation, prostaglandin E2 secretion, and synthesis of hyaluronic acid and sulfated glycosaminoglycan. It also stimulates the formation and secretion of plasminogen activator by human synovial cells. NAP-2 is a ligand for CXCR1 and CXCR2, and NAP-2, NAP-2(73), NAP-2(74), NAP-2(1-66), and most potent NAP-2(1-63) are chemoattractants and activators for neutrophils. TC-1 and TC-2 are antibacterial proteins, in vitro released from activated platelet alpha-granules. CTAP-III(1-81) is more potent than CTAP-III desensitize chemokine-induced neutrophil activation. The polypeptide is Platelet basic protein (PPBP) (Homo sapiens (Human)).